The primary structure comprises 209 residues: Redox-sensing transcriptional repressor Rex (209 aa).

A DNA-binding region (H-T-H motif) is located at residues 16 to 55 (LYYRFIQNLSLSGKQRVSSAELSEAVKVDSATIRRDFSYF). 90-95 (GVGNLG) lines the NAD(+) pocket.

It belongs to the transcriptional regulatory Rex family. As to quaternary structure, homodimer.

The protein localises to the cytoplasm. Functionally, modulates transcription in response to changes in cellular NADH/NAD(+) redox state. The polypeptide is Redox-sensing transcriptional repressor Rex (Bacillus cereus (strain Q1)).